The sequence spans 237 residues: Probable transcriptional regulatory protein WS1016 (237 aa).

Belongs to the TACO1 family.

It is found in the cytoplasm. In Wolinella succinogenes (strain ATCC 29543 / DSM 1740 / CCUG 13145 / JCM 31913 / LMG 7466 / NCTC 11488 / FDC 602W) (Vibrio succinogenes), this protein is Probable transcriptional regulatory protein WS1016.